Here is a 390-residue protein sequence, read N- to C-terminus: S-adenosylmethionine synthase 2 (390 aa).

Mg(2+) is bound at residue Glu-9. His-15 is a binding site for ATP. Glu-43 contributes to the K(+) binding site. 2 residues coordinate L-methionine: Glu-56 and Gln-99. ATP is bound by residues 167 to 169 (DGK), 235 to 238 (SGRF), Asp-246, 252 to 253 (RK), Ala-269, Lys-273, and Lys-277. Asp-246 provides a ligand contact to L-methionine. Lys-277 is a binding site for L-methionine.

The protein belongs to the AdoMet synthase family. In terms of assembly, homotetramer. The cofactor is Mn(2+). Requires Mg(2+) as cofactor. Co(2+) serves as cofactor. K(+) is required as a cofactor.

It localises to the cytoplasm. It carries out the reaction L-methionine + ATP + H2O = S-adenosyl-L-methionine + phosphate + diphosphate. It participates in amino-acid biosynthesis; S-adenosyl-L-methionine biosynthesis; S-adenosyl-L-methionine from L-methionine: step 1/1. Its function is as follows. Catalyzes the formation of S-adenosylmethionine from methionine and ATP. The reaction comprises two steps that are both catalyzed by the same enzyme: formation of S-adenosylmethionine (AdoMet) and triphosphate, and subsequent hydrolysis of the triphosphate. In Solanum tuberosum (Potato), this protein is S-adenosylmethionine synthase 2 (METK2).